A 386-amino-acid polypeptide reads, in one-letter code: Cell division protein FtsZ (386 aa).

Residues 20–24 (GGGGN), 107–109 (GTG), glutamate 138, arginine 142, and asparagine 186 each bind GTP. A disordered region spans residues 350–377 (LNQEQKTAAKAVNEQNAQGSKEPDYLDI).

It belongs to the FtsZ family. Homodimer. Polymerizes to form a dynamic ring structure in a strictly GTP-dependent manner. Interacts directly with several other division proteins.

The protein resides in the cytoplasm. In terms of biological role, essential cell division protein that forms a contractile ring structure (Z ring) at the future cell division site. The regulation of the ring assembly controls the timing and the location of cell division. One of the functions of the FtsZ ring is to recruit other cell division proteins to the septum to produce a new cell wall between the dividing cells. Binds GTP and shows GTPase activity. The polypeptide is Cell division protein FtsZ (Sodalis glossinidius).